The following is a 444-amino-acid chain: Phosphoglucosamine mutase (444 aa).

Catalysis depends on Ser101, which acts as the Phosphoserine intermediate. 4 residues coordinate Mg(2+): Ser101, Asp240, Asp242, and Asp244. Ser101 is subject to Phosphoserine.

The protein belongs to the phosphohexose mutase family. The cofactor is Mg(2+). In terms of processing, activated by phosphorylation.

The enzyme catalyses alpha-D-glucosamine 1-phosphate = D-glucosamine 6-phosphate. Catalyzes the conversion of glucosamine-6-phosphate to glucosamine-1-phosphate. The sequence is that of Phosphoglucosamine mutase from Aeromonas salmonicida (strain A449).